The primary structure comprises 294 residues: MHPRFQSAFAQLAENLQSALAPVLADEHFPALLTAEQVTMLKQATGLDEDALAFALLPLAAACARADLSHFNVGAIARGVSGTWYFGGNMEFLGATMQQTVHAEQSAISHAWLRGEHALNAITVNYTPCGHCRQFMNELNSGLELRINLPGREPHTLGDYLPDAFGPKDLDIKTLLMDEQNHGYALTGDELTQSAIAAANKSHAPYSQSPSGVALECRDGRIFSGSYAENAAFNPTLPPLQGALNLLSLNGYDYPDIQRAILAEKADAPLIQWDATAATLKALGCSNIDRTLLA.

2 consecutive CMP/dCMP-type deaminase domains span residues 48–168 and 186–294; these read DEDA…FGPK and LTGD…TLLA. 89–91 provides a ligand contact to substrate; that stretch reads NME. Residue His-102 participates in Zn(2+) binding. Catalysis depends on Glu-104, which acts as the Proton donor. Residues Cys-129 and Cys-132 each coordinate Zn(2+).

It belongs to the cytidine and deoxycytidylate deaminase family. In terms of assembly, homodimer. It depends on Zn(2+) as a cofactor.

The enzyme catalyses cytidine + H2O + H(+) = uridine + NH4(+). It carries out the reaction 2'-deoxycytidine + H2O + H(+) = 2'-deoxyuridine + NH4(+). Its function is as follows. This enzyme scavenges exogenous and endogenous cytidine and 2'-deoxycytidine for UMP synthesis. This is Cytidine deaminase from Enterobacter sp. (strain 638).